Reading from the N-terminus, the 104-residue chain is UPF0145 protein STH1265 (104 aa).

It belongs to the UPF0145 family.

The chain is UPF0145 protein STH1265 from Symbiobacterium thermophilum (strain DSM 24528 / JCM 14929 / IAM 14863 / T).